A 467-amino-acid polypeptide reads, in one-letter code: tRNA modification GTPase MnmE (467 aa).

Residues arginine 30, glutamate 92, and arginine 131 each coordinate (6S)-5-formyl-5,6,7,8-tetrahydrofolate. Positions 226-388 (GLKVAIIGRP…LEAAILNAVN (163 aa)) constitute a TrmE-type G domain. Asparagine 236 lines the K(+) pocket. GTP is bound by residues 236-241 (NVGKSS), 255-261 (TDLPGTT), and 280-283 (DTAG). Serine 240 is a binding site for Mg(2+). The K(+) site is built by threonine 255, leucine 257, and threonine 260. Threonine 261 contributes to the Mg(2+) binding site. Lysine 467 lines the (6S)-5-formyl-5,6,7,8-tetrahydrofolate pocket.

The protein belongs to the TRAFAC class TrmE-Era-EngA-EngB-Septin-like GTPase superfamily. TrmE GTPase family. Homodimer. Heterotetramer of two MnmE and two MnmG subunits. Requires K(+) as cofactor.

The protein resides in the cytoplasm. In terms of biological role, exhibits a very high intrinsic GTPase hydrolysis rate. Involved in the addition of a carboxymethylaminomethyl (cmnm) group at the wobble position (U34) of certain tRNAs, forming tRNA-cmnm(5)s(2)U34. In Trichodesmium erythraeum (strain IMS101), this protein is tRNA modification GTPase MnmE.